The chain runs to 315 residues: Protein OPG185 (315 aa).

The first 16 residues, 1–16, serve as a signal peptide directing secretion; sequence MTRLPILLLLISLVYA. An Ig-like V-type domain is found at 17–121; sequence TPFPQTSKKI…NDTDKVDYEE (105 aa). Residues 17–279 are Virion surface-facing; sequence TPFPQTSKKI…SNYKTKDFVE (263 aa). A disulfide bond links Cys-34 and Cys-103. 4 N-linked (GlcNAc...) asparagine; by host glycosylation sites follow: Asn-37, Asn-69, Asn-112, and Asn-161. Residues 193–202 are compositionally biased toward polar residues; it reads NTVSASSGES. The segment at 193-213 is disordered; sequence NTVSASSGESTTDETPEPITD. Asn-254 is a glycosylation site (N-linked (GlcNAc...) asparagine; by host). The helical transmembrane segment at 280-303 threads the bilayer; the sequence is IFGITALIILSAVAIFCITYYIYN. The Intravirion segment spans residues 304 to 315; sequence KRSRKYKTENKV.

It belongs to the orthopoxvirus OPG185 family. As to quaternary structure, heterodimerizes with OPG040. The heterodimer OPG185-OPG040 interacts with components of the entry fusion complex OPG143 and OPG094. Heterodimer with C3/VPC protein; disulfide-linked. Glycosylated; contains phosphate and sulfate-substituted glycans. O-glycosylation is required for hemagglutination and hemadsorption activities of infected cell membranes.

It is found in the virion membrane. Its subcellular location is the host membrane. Functionally, prevents cell to cell fusion by interacting with and directing the viral OPG040 protein on the host plasma membrane. The OPG185-OPG040 complex associates with components of the entry fusion complex (EFC) presumably to avoid superinfection and syncytium formation. Via its interaction with C3/VCP protein, protects the infected cell and probably also the extracellular enveloped virus from complement attack. This is Protein OPG185 (OPG185) from Homo sapiens (Human).